The chain runs to 119 residues: Protein TusC (119 aa).

It belongs to the DsrF/TusC family. As to quaternary structure, heterohexamer, formed by a dimer of trimers. The hexameric TusBCD complex contains 2 copies each of TusB, TusC and TusD. The TusBCD complex interacts with TusE.

It is found in the cytoplasm. Its function is as follows. Part of a sulfur-relay system required for 2-thiolation of 5-methylaminomethyl-2-thiouridine (mnm(5)s(2)U) at tRNA wobble positions. This is Protein TusC from Serratia proteamaculans (strain 568).